Here is a 396-residue protein sequence, read N- to C-terminus: 1-deoxy-D-xylulose 5-phosphate reductoisomerase (396 aa).

Positions 15, 16, 17, 18, 41, and 129 each coordinate NADPH. Lys130 is a binding site for 1-deoxy-D-xylulose 5-phosphate. Glu131 contacts NADPH. Residue Asp155 coordinates Mn(2+). The 1-deoxy-D-xylulose 5-phosphate site is built by Ser156, Glu157, Ser182, and His205. Mn(2+) is bound at residue Glu157. Gly211 contributes to the NADPH binding site. 4 residues coordinate 1-deoxy-D-xylulose 5-phosphate: Ser218, Asn223, Lys224, and Glu227. Residue Glu227 participates in Mn(2+) binding.

It belongs to the DXR family. Mg(2+) serves as cofactor. The cofactor is Mn(2+).

It catalyses the reaction 2-C-methyl-D-erythritol 4-phosphate + NADP(+) = 1-deoxy-D-xylulose 5-phosphate + NADPH + H(+). Its pathway is isoprenoid biosynthesis; isopentenyl diphosphate biosynthesis via DXP pathway; isopentenyl diphosphate from 1-deoxy-D-xylulose 5-phosphate: step 1/6. Catalyzes the NADPH-dependent rearrangement and reduction of 1-deoxy-D-xylulose-5-phosphate (DXP) to 2-C-methyl-D-erythritol 4-phosphate (MEP). The chain is 1-deoxy-D-xylulose 5-phosphate reductoisomerase from Xanthomonas oryzae pv. oryzae (strain MAFF 311018).